The sequence spans 173 residues: Aliphatic sulfonate oxidoreductase, polyferredoxin-like subunit (173 aa).

4Fe-4S ferredoxin-type domains lie at 9 to 40 (IWILITPDKCSGCRLCEVTCSLEHEGIIWPEA), 48 to 80 (LFPGINVPHTCVQCPDYPCVNACPTNALSVDEK), and 82 to 111 (GAVVVNEEKCITCGACVLACPGKVPRIPAG). The [4Fe-4S] cluster site is built by cysteine 18, cysteine 21, cysteine 24, cysteine 28, cysteine 58, cysteine 61, cysteine 66, cysteine 70, cysteine 91, cysteine 94, cysteine 97, cysteine 101, cysteine 118, cysteine 121, cysteine 127, and cysteine 131.

As to quaternary structure, heterodimer composed of a small WOR5-S subunit, with four [4Fe-4S] clusters, and a large WOR5-L subunit, containing the active site tungsto-bispyranopterin cofactor as well as another [4Fe-4S] cluster. [4Fe-4S] cluster is required as a cofactor.

Its subcellular location is the cytoplasm. Polyferredoxin-like subunit of an oxidoreductase that can desulfonate and oxidize aliphatic sulfonates such as taurine. May serve as a an electron-transfer subunit between the catalytic subunit and ferredoxin. This chain is Aliphatic sulfonate oxidoreductase, polyferredoxin-like subunit, found in Pyrococcus furiosus (strain ATCC 43587 / DSM 3638 / JCM 8422 / Vc1).